The following is a 740-amino-acid chain: Ion-translocating oxidoreductase complex subunit C (740 aa).

2 consecutive 4Fe-4S ferredoxin-type domains span residues 369 to 397 (GEPQ…QQLY) and 407 to 436 (KATT…VQYF). Cys-377, Cys-380, Cys-383, Cys-387, Cys-416, Cys-419, Cys-422, and Cys-426 together coordinate [4Fe-4S] cluster. Disordered stretches follow at residues 602–621 (KLEQ…PRKA) and 660–718 (ARAK…RKAA). Residues 611–621 (KPEEQVDPRKA) are compositionally biased toward basic and acidic residues.

It belongs to the 4Fe4S bacterial-type ferredoxin family. RnfC subfamily. As to quaternary structure, the complex is composed of six subunits: RsxA, RsxB, RsxC, RsxD, RsxE and RsxG. [4Fe-4S] cluster serves as cofactor.

It is found in the cell inner membrane. Functionally, part of a membrane-bound complex that couples electron transfer with translocation of ions across the membrane. Required to maintain the reduced state of SoxR. The chain is Ion-translocating oxidoreductase complex subunit C from Escherichia coli O9:H4 (strain HS).